A 26-amino-acid chain; its full sequence is Halocyntin (26 aa).

Has strong antibacterial activity against the Gram-positive bacteria M.luteus, S.aureus, B.megaterium, A.viridans and E.faecalis, and against the Gram-negative bacterium K.pneumoniae. Has less potent antibacterial activity against the Gram-negative bacteria E.coli DH5alpha, S.typhimurium, P.aeruginosa, E.aerogenes and N.gonorrhoeae. Has moderate hemolytic activity against sheep erythrocytes. The chain is Halocyntin from Halocynthia papillosa (Red sea-squirt).